Consider the following 350-residue polypeptide: MFLMKPVCVLLVTCVLHRSHAWSVNNFLMTGPKAYLVYSSSVAAGAQSGIEECKYQFAWDRWNCPERALQLSSHGGLRSANRETAFVHAISSAGVMYTLTRNCSLGDFDNCGCDDSRNGQLGGQGWLWGGCSDNVGFGEAISKQFVDALETGQDARAAMNLHNNEAGRKAVKGTMKRTCKCHGVSGSCTTQTCWLQLPEFREVGAHLKEKYHAALKVDLLQGAGNSAAGRGAIADTFRSISTRELVHLEDSPDYCLENKTLGLLGTEGRECLRRGRALGRWERRSCRRLCGDCGLAVEERRAETVSSCNCKFHWCCAVRCEQCRRRVTKYFCSRAERPPRGAAHKPGKNS.

A signal peptide spans 1–21 (MFLMKPVCVLLVTCVLHRSHA). Cysteines 53 and 64 form a disulfide. A glycan (N-linked (GlcNAc...) asparagine) is linked at asparagine 102. Disulfide bonds link cysteine 103–cysteine 111, cysteine 113–cysteine 131, cysteine 179–cysteine 193, cysteine 181–cysteine 188, cysteine 255–cysteine 293, cysteine 271–cysteine 286, cysteine 290–cysteine 332, cysteine 308–cysteine 323, cysteine 310–cysteine 320, and cysteine 315–cysteine 316. Serine 185 carries O-palmitoleoyl serine lipidation. Asparagine 258 carries an N-linked (GlcNAc...) asparagine glycan.

This sequence belongs to the Wnt family. In terms of processing, palmitoleoylation is required for efficient binding to frizzled receptors. Depalmitoleoylation leads to Wnt signaling pathway inhibition. Proteolytic processing by TIKI1 and TIKI2 promotes oxidation and formation of large disulfide-bond oligomers, leading to inactivation of WNT8B.

It localises to the secreted. Its subcellular location is the extracellular space. It is found in the extracellular matrix. Ligand for members of the frizzled family of seven transmembrane receptors. May play an important role in the development and differentiation of certain forebrain structures, notably the hippocampus. The polypeptide is Protein Wnt-8b (Wnt8b) (Mus musculus (Mouse)).